A 1278-amino-acid polypeptide reads, in one-letter code: NPC intracellular cholesterol transporter 1 (1278 aa).

The N-terminal stretch at 1–22 is a signal peptide; it reads MTARGLALGLLLLLLCPAQVFS. The Lumenal segment spans residues 23-261; it reads QSCVWYGECG…QPPPPPAPWT (239 aa). Intrachain disulfides connect Cys-25/Cys-74, Cys-31/Cys-42, Cys-63/Cys-109, Cys-75/Cys-113, Cys-97/Cys-238, Cys-100/Cys-160, Cys-177/Cys-184, Cys-227/Cys-243, and Cys-240/Cys-247. Asn-41 contributes to the cholesterol binding site. The N-linked (GlcNAc...) asparagine glycan is linked to Asn-70. Gln-79 is a binding site for cholesterol. Residues Asn-122 and Asn-135 are each glycosylated (N-linked (GlcNAc...) asparagine). A glycan (N-linked (GlcNAc...) asparagine; atypical) is linked at Asn-158. The tract at residues 175-205 is important for cholesterol binding and cholesterol transfer from NPC1 to liposomes; it reads LLCGKDADACNATNWIEYMFNKDNGQAPFTI. N-linked (GlcNAc...) asparagine glycans are attached at residues Asn-185 and Asn-222. A helical membrane pass occupies residues 262–282; the sequence is ILGLDAMYVIMWITYMAFLLV. The Cytoplasmic portion of the chain corresponds to 283-350; it reads FFGAFFAVWC…RWGSFCVRNP (68 aa). A helical transmembrane segment spans residues 351–371; it reads GCVIFFSLVFITACSSGLVFV. Over 372-620 the chain is Lumenal; the sequence is RVTTNPVDLW…DELNRESDSD (249 aa). Residues Asn-452, Asn-459, Asn-478, Asn-524, Asn-557, Asn-572, and Asn-598 are each glycosylated (N-linked (GlcNAc...) asparagine). Intrachain disulfides connect Cys-468/Cys-479 and Cys-516/Cys-533. The SSD domain maps to 620–785; the sequence is DVFTVVISYA…ITCFVSLLGL (166 aa). Residues 621-641 form a helical membrane-spanning segment; the sequence is VFTVVISYAIMFLYISLALGH. Residues 642-653 lie on the Cytoplasmic side of the membrane; it reads MKSCRRLLVDSK. Residues 654–675 form a helical membrane-spanning segment; that stretch reads VSLGIAGILIVLSSVACSLGVF. Topologically, residues 676–685 are lumenal; the sequence is SYIGLPLTLI. Residues 686 to 706 traverse the membrane as a helical segment; the sequence is VIEVIPFLVLAVGVDNIFILV. At 707–730 the chain is on the cytoplasmic side; the sequence is QAYQRDERLQGETLDQQLGRVLGE. Residues 731 to 751 form a helical membrane-spanning segment; it reads VAPSMFLSSFSETVAFFLGAL. Topologically, residues 752-759 are lumenal; it reads SVMPAVHT. The helical transmembrane segment at 760–783 threads the bilayer; it reads FSLFAGLAVFIDFLLQITCFVSLL. The Cytoplasmic portion of the chain corresponds to 784 to 832; it reads GLDIKRQEKNRLDIFCCVRGAEDGTSVQASESCLFRFFKNSYSPLLLKD. Residues 833–853 form a helical membrane-spanning segment; the sequence is WMRPIVIAIFVGVLSFSIAVL. Residues 854–1097 are Lumenal-facing; sequence NKVDIGLDQS…YEQYLTIIDD (244 aa). Cys-909 and Cys-914 form a disulfide bridge. N-linked (GlcNAc...) asparagine glycans are attached at residues Asn-916, Asn-931, Asn-961, Asn-968, Asn-1064, and Asn-1072. 3 disulfides stabilise this stretch: Cys-956/Cys-1011, Cys-957/Cys-979, and Cys-967/Cys-976. The chain crosses the membrane as a helical span at residues 1098-1118; that stretch reads TIFNLGVSLGAIFLVTMVLLG. The Cytoplasmic portion of the chain corresponds to 1119-1124; sequence CELWSA. A helical transmembrane segment spans residues 1125-1145; the sequence is VIMCATIAMVLVNMFGVMWLW. Residues 1146–1150 are Lumenal-facing; sequence GISLN. Residues 1151-1171 form a helical membrane-spanning segment; that stretch reads AVSLVNLVMSCGISVEFCSHI. The Cytoplasmic portion of the chain corresponds to 1172 to 1194; sequence TRAFTVSMKGSRVERAEEALAHM. Residues 1195 to 1215 traverse the membrane as a helical segment; sequence GSSVFSGITLTKFGGIVVLAF. Residues 1216–1223 are Lumenal-facing; the sequence is AKSQIFQI. Residues 1224–1244 form a helical membrane-spanning segment; it reads FYFRMYLAMVLLGATHGLIFL. The Cytoplasmic segment spans residues 1245 to 1278; the sequence is PVLLSYIGPSVNKAKSCATEERYKGTERERLLNF. Residues 1275 to 1278 are required for location in lysosomes; sequence LLNF. A Di-leucine motif motif is present at residues 1275-1278; the sequence is LLNF.

This sequence belongs to the patched family. In terms of assembly, interacts (via the second lumenal domain) with NPC2. Interacts with TMEM97; the interaction may decrease NPC1 availability to the cell. Interacts with TIM1. Interacts with SLC38A9; this interaction inhibits cholesterol-mediated mTORC1 activation via its sterol transport activity. (Microbial infection) Interacts with ebolavirus glycoprotein. In terms of processing, N-glycosylated.

The protein resides in the late endosome membrane. It is found in the lysosome membrane. It carries out the reaction cholesterol(in) = cholesterol(out). Intracellular cholesterol transporter which acts in concert with NPC2 and plays an important role in the egress of cholesterol from the endosomal/lysosomal compartment. Unesterified cholesterol that has been released from LDLs in the lumen of the late endosomes/lysosomes is transferred by NPC2 to the cholesterol-binding pocket in the N-terminal domain of NPC1. Cholesterol binds to NPC1 with the hydroxyl group buried in the binding pocket. Binds oxysterol with higher affinity than cholesterol. May play a role in vesicular trafficking in glia, a process that may be crucial for maintaining the structural and functional integrity of nerve terminals. Inhibits cholesterol-mediated mTORC1 activation throught its interaction with SLC38A9. In terms of biological role, (Microbial infection) Acts as an endosomal entry receptor for ebolavirus. The protein is NPC intracellular cholesterol transporter 1 of Homo sapiens (Human).